The sequence spans 301 residues: MLSTKRKALDTGLQRRVRARRESSEEIEESSSDSAPSEIGRDDNEEEESSSDETEDEVEEEASESEEETSNDAAASISFGALAKAQATMSKPSKRDSKKSKKSNADGWEDNEATERKAGKKDQRDFTRSSKNAPTEISSKKAVSRRREVVPVKKREIRDPRFDPTHGPVDMGKIEKVYDFLVDYREDEIKKLRKTIKKTKDEDEKEKLKRDLLSMESRKKTDAKKRKAREILDKHRKEEKELVKEGKTPYYLKKAEQKKRVLLDTYGELKGRQLDRVIERRRKKVEGKEKKNMPRARRVVE.

Disordered stretches follow at residues 1 to 169, 199 to 232, and 282 to 301; these read MLST…HGPV, TKDE…REIL, and RKKV…RVVE. Residues 43-70 show a composition bias toward acidic residues; that stretch reads DNEEEESSSDETEDEVEEEASESEEETS. 4 stretches are compositionally biased toward basic and acidic residues: residues 113-128, 145-164, 199-220, and 286-301; these read ATER…DFTR, RRRE…RFDP, TKDE…SRKK, and EGKE…RVVE. A coiled-coil region spans residues 182 to 272; the sequence is VDYREDEIKK…LDTYGELKGR (91 aa).

It belongs to the RRP36 family. As to quaternary structure, associates with 90S and pre-40S pre-ribosomal particles.

The protein localises to the nucleus. It localises to the nucleolus. Functionally, component of the 90S pre-ribosome involved in the maturation of rRNAs. Required for early cleavages of the pre-RNAs in the 40S ribosomal subunit maturation pathway. The sequence is that of rRNA biogenesis protein rrp36 (rrp36) from Sclerotinia sclerotiorum (strain ATCC 18683 / 1980 / Ss-1) (White mold).